The following is a 190-amino-acid chain: Female-specific histamine-binding protein 1 (190 aa).

Positions 1–18 are cleaved as a signal peptide; the sequence is MKLLLSLAFVLALSQVKA. Y54, D57, W60, E100, Y118, E153, and W155 together coordinate histamine. 2 cysteine pairs are disulfide-bonded: C66-C187 and C137-C166.

The protein belongs to the calycin superfamily. Histamine-binding salivary protein family. As to quaternary structure, monomer. As to expression, expressed in salivary glands.

It localises to the secreted. Salivary tick protein that acts by scavenging histamine at the wound site, outcompeting histamine receptors for histamine, thereby overcoming host inflammatory responses. Binds histamine with a high-affinity (Kd=18 nM). Contains two binding histamine sites (H and L), that appear to bind histamine with differing affinities (high and low). In vivo, when tested on a mouse asthma model, shows a profound inhibitory effect on allergic asthma. Aerosol administration of this protein prevents airway hyperreactivity and abrogates peribronchial inflammation, eosinophil recruitment, mucus hypersecretion, and interleukins (IL-4 and IL-5) secretion. In addition, when tested on a mouse model of acute respiratory distress syndrome (ARDS), it attenuates endotoxin-induced acute lung injury. The chain is Female-specific histamine-binding protein 1 from Rhipicephalus appendiculatus (Brown ear tick).